Reading from the N-terminus, the 364-residue chain is N-alpha-acetyltransferase 30 (364 aa).

The segment covering 1 to 18 (MAEVPPGPSSLLPPPAPA) has biased composition (pro residues). 3 disordered regions span residues 1-21 (MAEV…AAPA), 39-65 (SEDE…TSAK), and 110-164 (EAAA…SDPA). A phosphoserine mark is found at S39 and S54. A compositionally biased stretch (acidic residues) spans 39-48 (SEDEEDDEEH). A compositionally biased stretch (basic and acidic residues) spans 126–135 (AEGHPGERPP). Over residues 152 to 164 (AAAAAAGAASDPA) the composition is skewed to low complexity. S192, S198, and S201 each carry phosphoserine. Residues 216-364 (RYVRYESELQ…DALRLKLWLR (149 aa)) enclose the N-acetyltransferase domain. K235 carries the N6-acetyllysine modification.

The protein belongs to the acetyltransferase family. MAK3 subfamily. As to quaternary structure, component of the N-terminal acetyltransferase C (NatC) complex, which is composed of NAA35, NAA38 and NAA30.

It localises to the cytoplasm. The protein resides in the nucleus. It catalyses the reaction N-terminal L-methionyl-L-leucyl-[protein] + acetyl-CoA = N-terminal N(alpha)-acetyl-L-methionyl-L-leucyl-[protein] + CoA + H(+). The enzyme catalyses N-terminal L-methionyl-L-isoleucyl-[protein] + acetyl-CoA = N-terminal N(alpha)-acetyl-L-methionyl-L-isoleucyl-[protein] + CoA + H(+). The catalysed reaction is N-terminal L-methionyl-L-phenylalanyl-[protein] + acetyl-CoA = N-terminal N(alpha)-acetyl-L-methionyl-L-phenylalanyl-[protein] + CoA + H(+). It carries out the reaction N-terminal L-methionyl-L-tryptophyl-[protein] + acetyl-CoA = N-terminal N(alpha)-acetyl-L-methionyl-L-tryptophyl-[protein] + CoA + H(+). It catalyses the reaction N-terminal L-methionyl-L-tyrosyl-[protein] + acetyl-CoA = N-terminal N(alpha)-acetyl-L-methionyl-L-tyrosyl-[protein] + CoA + H(+). In terms of biological role, catalytic subunit of the N-terminal acetyltransferase C (NatC) complex. Catalyzes acetylation of the N-terminal methionine residues of peptides beginning with Met-Leu-Ala and Met-Leu-Gly. N-terminal acetylation protects proteins from ubiquitination and degradation by the N-end rule pathway. Necessary for the lysosomal localization and function of ARL8B sugeesting that ARL8B is a NatC substrate. This is N-alpha-acetyltransferase 30 (Naa30) from Mus musculus (Mouse).